The sequence spans 266 residues: Ribosomal RNA small subunit methyltransferase A (266 aa).

S-adenosyl-L-methionine is bound by residues Asn11, Leu13, Gly37, Glu57, Asp85, and Asn104.

The protein belongs to the class I-like SAM-binding methyltransferase superfamily. rRNA adenine N(6)-methyltransferase family. RsmA subfamily.

Its subcellular location is the cytoplasm. It carries out the reaction adenosine(1518)/adenosine(1519) in 16S rRNA + 4 S-adenosyl-L-methionine = N(6)-dimethyladenosine(1518)/N(6)-dimethyladenosine(1519) in 16S rRNA + 4 S-adenosyl-L-homocysteine + 4 H(+). Its function is as follows. Specifically dimethylates two adjacent adenosines (A1518 and A1519) in the loop of a conserved hairpin near the 3'-end of 16S rRNA in the 30S particle. May play a critical role in biogenesis of 30S subunits. The sequence is that of Ribosomal RNA small subunit methyltransferase A from Campylobacter jejuni (strain RM1221).